A 334-amino-acid polypeptide reads, in one-letter code: Aromatic O-demethylase, reductase subunit (334 aa).

The 2Fe-2S ferredoxin-type domain maps to 1–91; it reads MTFAVSVGGR…DTEVRSTADA (91 aa). Cysteine 35, cysteine 40, cysteine 43, and cysteine 75 together coordinate [2Fe-2S] cluster. One can recognise an FAD-binding FR-type domain in the interval 98 to 198; the sequence is LRDLTATVLE…TGPLGDFHLP (101 aa). FAD is bound by residues 145–148, 162–164, 170–172, threonine 215, phenylalanine 330, and serine 334; these read RQYS, HVR, and VAT.

Monomer. Forms a heterodimer with GcoA. FAD is required as a cofactor. The cofactor is [2Fe-2S] cluster.

It carries out the reaction 2 oxidized [cytochrome P450] + NADH = 2 reduced [cytochrome P450] + NAD(+) + H(+). It participates in aromatic compound metabolism. Its function is as follows. Part of a two-component P450 system that efficiently O-demethylates diverse aromatic substrates such as guaiacol and a wide variety of lignin-derived monomers. Is likely involved in lignin degradation, allowing Amycolatopsis sp. ATCC 39116 to catabolize plant biomass. GcoB transfers electrons from NADH to the cytochrome P450 subunit GcoA. Highly prefers NADH over NADPH as the electron donor. The sequence is that of Aromatic O-demethylase, reductase subunit from Amycolatopsis sp. (strain ATCC 39116 / 75iv2).